Reading from the N-terminus, the 486-residue chain is UDP-N-acetylmuramate--L-alanine ligase (486 aa).

ATP is bound at residue glycine 129–threonine 135.

Belongs to the MurCDEF family.

It localises to the cytoplasm. It carries out the reaction UDP-N-acetyl-alpha-D-muramate + L-alanine + ATP = UDP-N-acetyl-alpha-D-muramoyl-L-alanine + ADP + phosphate + H(+). It participates in cell wall biogenesis; peptidoglycan biosynthesis. Cell wall formation. The protein is UDP-N-acetylmuramate--L-alanine ligase of Vibrio cholerae serotype O1 (strain ATCC 39315 / El Tor Inaba N16961).